The chain runs to 363 residues: Protein CPn_1058/CP_0792/CPj1058/CpB1100 (363 aa).

The signal sequence occupies residues 1–27 (MKLYQTLRGIVLVSTGCIFLGMHGGYA).

The protein belongs to the chlamydial CPn_1058/CT_355/TC_0634 family.

In Chlamydia pneumoniae (Chlamydophila pneumoniae), this protein is Protein CPn_1058/CP_0792/CPj1058/CpB1100.